Here is a 194-residue protein sequence, read N- to C-terminus: ATP-dependent Clp protease proteolytic subunit (194 aa).

Ser97 serves as the catalytic Nucleophile. The active site involves His122.

This sequence belongs to the peptidase S14 family. As to quaternary structure, fourteen ClpP subunits assemble into 2 heptameric rings which stack back to back to give a disk-like structure with a central cavity, resembling the structure of eukaryotic proteasomes.

The protein localises to the cytoplasm. It catalyses the reaction Hydrolysis of proteins to small peptides in the presence of ATP and magnesium. alpha-casein is the usual test substrate. In the absence of ATP, only oligopeptides shorter than five residues are hydrolyzed (such as succinyl-Leu-Tyr-|-NHMec, and Leu-Tyr-Leu-|-Tyr-Trp, in which cleavage of the -Tyr-|-Leu- and -Tyr-|-Trp bonds also occurs).. Cleaves peptides in various proteins in a process that requires ATP hydrolysis. Has a chymotrypsin-like activity. Plays a major role in the degradation of misfolded proteins. This Thermus thermophilus (strain ATCC BAA-163 / DSM 7039 / HB27) protein is ATP-dependent Clp protease proteolytic subunit.